The primary structure comprises 715 residues: Fatty acid oxidation complex subunit alpha (715 aa).

The interval 1–190 is enoyl-CoA hydratase; it reads MTTTSAFMLN…KAGLVDDVVP (190 aa). A 3-hydroxyacyl-CoA dehydrogenase region spans residues 306–715; that stretch reads GPLNSVGILG…WTNGETDQGN (410 aa).

The protein in the N-terminal section; belongs to the enoyl-CoA hydratase/isomerase family. In the central section; belongs to the 3-hydroxyacyl-CoA dehydrogenase family. Heterotetramer of two alpha chains (FadJ) and two beta chains (FadI).

The protein localises to the cytoplasm. It carries out the reaction a (3S)-3-hydroxyacyl-CoA = a (2E)-enoyl-CoA + H2O. It catalyses the reaction a 4-saturated-(3S)-3-hydroxyacyl-CoA = a (3E)-enoyl-CoA + H2O. The catalysed reaction is a (3S)-3-hydroxyacyl-CoA + NAD(+) = a 3-oxoacyl-CoA + NADH + H(+). The enzyme catalyses (3S)-3-hydroxybutanoyl-CoA = (3R)-3-hydroxybutanoyl-CoA. It functions in the pathway lipid metabolism; fatty acid beta-oxidation. In terms of biological role, catalyzes the formation of a hydroxyacyl-CoA by addition of water on enoyl-CoA. Also exhibits 3-hydroxyacyl-CoA epimerase and 3-hydroxyacyl-CoA dehydrogenase activities. The polypeptide is Fatty acid oxidation complex subunit alpha (Salmonella newport (strain SL254)).